The chain runs to 185 residues: Ribosome-recycling factor (185 aa).

The disordered stretch occupies residues 135–159 (ANDKLKASEKNKEASEDEVKRAQEK).

This sequence belongs to the RRF family.

The protein localises to the cytoplasm. Responsible for the release of ribosomes from messenger RNA at the termination of protein biosynthesis. May increase the efficiency of translation by recycling ribosomes from one round of translation to another. The polypeptide is Ribosome-recycling factor (Moorella thermoacetica (strain ATCC 39073 / JCM 9320)).